The following is a 387-amino-acid chain: 3-ketoacyl-CoA thiolase (387 aa).

Cys91 acts as the Acyl-thioester intermediate in catalysis. Catalysis depends on proton acceptor residues His343 and Cys373.

Belongs to the thiolase-like superfamily. Thiolase family. As to quaternary structure, heterotetramer of two alpha chains (FadB) and two beta chains (FadA).

It is found in the cytoplasm. The catalysed reaction is an acyl-CoA + acetyl-CoA = a 3-oxoacyl-CoA + CoA. Its pathway is lipid metabolism; fatty acid beta-oxidation. Functionally, catalyzes the final step of fatty acid oxidation in which acetyl-CoA is released and the CoA ester of a fatty acid two carbons shorter is formed. The chain is 3-ketoacyl-CoA thiolase from Vibrio cholerae serotype O1 (strain ATCC 39315 / El Tor Inaba N16961).